A 273-amino-acid chain; its full sequence is Putative cysteine-rich repeat secretory protein 40 (273 aa).

A signal peptide spans 1–32 (MYPSCSLLQRLVWFPFLALVATQLLFIRNVSS). Gnk2-homologous domains follow at residues 39 to 141 (YLHH…SISV) and 151 to 264 (YENN…LYPF).

The protein belongs to the cysteine-rich repeat secretory protein family.

Its subcellular location is the secreted. The protein is Putative cysteine-rich repeat secretory protein 40 (CRRSP40) of Arabidopsis thaliana (Mouse-ear cress).